The sequence spans 98 residues: Small ribosomal subunit protein uS19 (98 aa).

Positions 77–98 are disordered; it reads TRTFRGHAGGKAEKGGSAPKRK.

This sequence belongs to the universal ribosomal protein uS19 family.

In terms of biological role, protein S19 forms a complex with S13 that binds strongly to the 16S ribosomal RNA. This is Small ribosomal subunit protein uS19 from Chlorobium luteolum (strain DSM 273 / BCRC 81028 / 2530) (Pelodictyon luteolum).